The chain runs to 447 residues: NADP-specific glutamate dehydrogenase (447 aa).

Substrate-binding residues include Lys92, Gln113, and Lys116. The Proton donor role is filled by Lys128. A substrate-binding site is contributed by Gly167. Residues Thr211 and Asn242 each coordinate NADP(+). Ser380 is a binding site for substrate.

It belongs to the Glu/Leu/Phe/Val dehydrogenases family. As to quaternary structure, homohexamer.

The enzyme catalyses L-glutamate + NADP(+) + H2O = 2-oxoglutarate + NH4(+) + NADPH + H(+). In terms of biological role, catalyzes the reversible oxidative deamination of glutamate to alpha-ketoglutarate and ammonia. This chain is NADP-specific glutamate dehydrogenase (gdhA), found in Salmonella typhimurium (strain LT2 / SGSC1412 / ATCC 700720).